We begin with the raw amino-acid sequence, 214 residues long: Urease accessory protein UreF (214 aa).

It belongs to the UreF family. As to quaternary structure, ureD, UreF and UreG form a complex that acts as a GTP-hydrolysis-dependent molecular chaperone, activating the urease apoprotein by helping to assemble the nickel containing metallocenter of UreC. The UreE protein probably delivers the nickel.

Its subcellular location is the cytoplasm. In terms of biological role, required for maturation of urease via the functional incorporation of the urease nickel metallocenter. This is Urease accessory protein UreF from Ruegeria sp. (strain TM1040) (Silicibacter sp.).